The chain runs to 490 residues: Cheilanthifoline synthase (490 aa).

Residues 2-22 (EESLWVVTATVVVVFAIAKLL) traverse the membrane as a helical segment. Cysteine 432 lines the heme pocket.

Belongs to the cytochrome P450 family. The cofactor is heme. Expressed in roots. Detected in leaves and stems.

The protein resides in the endoplasmic reticulum membrane. The catalysed reaction is (S)-scoulerine + reduced [NADPH--hemoprotein reductase] + O2 = (S)-cheilanthifoline + oxidized [NADPH--hemoprotein reductase] + 2 H2O + H(+). It participates in alkaloid biosynthesis. Methylenedioxy bridge-forming cytochrome P450 involved in the biosynthesis of isoquinoline alkaloids. Converts (S)-scoulerine into (R,S)-cheilanthifoline. Catalyzes an oxidative reaction that does not incorporate oxygen into the product. This chain is Cheilanthifoline synthase (CYP719A5), found in Eschscholzia californica (California poppy).